Consider the following 500-residue polypeptide: Glycerol kinase (500 aa).

Threonine 13 is a binding site for ADP. Positions 13, 14, and 15 each coordinate ATP. Threonine 13 lines the sn-glycerol 3-phosphate pocket. Residue arginine 17 coordinates ADP. Sn-glycerol 3-phosphate is bound by residues arginine 83, glutamate 84, tyrosine 135, and aspartate 244. Glycerol contacts are provided by arginine 83, glutamate 84, tyrosine 135, aspartate 244, and glutamine 245. Residues threonine 266 and glycine 309 each contribute to the ADP site. 4 residues coordinate ATP: threonine 266, glycine 309, glutamine 313, and glycine 410. ADP is bound by residues glycine 410 and asparagine 414.

The protein belongs to the FGGY kinase family.

It catalyses the reaction glycerol + ATP = sn-glycerol 3-phosphate + ADP + H(+). It functions in the pathway polyol metabolism; glycerol degradation via glycerol kinase pathway; sn-glycerol 3-phosphate from glycerol: step 1/1. With respect to regulation, inhibited by fructose 1,6-bisphosphate (FBP). Functionally, key enzyme in the regulation of glycerol uptake and metabolism. Catalyzes the phosphorylation of glycerol to yield sn-glycerol 3-phosphate. The polypeptide is Glycerol kinase (Burkholderia ambifaria (strain MC40-6)).